The primary structure comprises 352 residues: N-acetyl-gamma-glutamyl-phosphate reductase (352 aa).

The active site involves C155.

It belongs to the NAGSA dehydrogenase family. Type 1 subfamily.

It localises to the cytoplasm. It catalyses the reaction N-acetyl-L-glutamate 5-semialdehyde + phosphate + NADP(+) = N-acetyl-L-glutamyl 5-phosphate + NADPH + H(+). Its pathway is amino-acid biosynthesis; L-arginine biosynthesis; N(2)-acetyl-L-ornithine from L-glutamate: step 3/4. Catalyzes the NADPH-dependent reduction of N-acetyl-5-glutamyl phosphate to yield N-acetyl-L-glutamate 5-semialdehyde. In Cyanothece sp. (strain PCC 7425 / ATCC 29141), this protein is N-acetyl-gamma-glutamyl-phosphate reductase.